The chain runs to 405 residues: Deoxyguanosinetriphosphate triphosphohydrolase-like protein (405 aa).

The HD domain occupies 75 to 219; the sequence is RLTHTIEVAQ…AAIADDIAYN (145 aa).

This sequence belongs to the dGTPase family. Type 2 subfamily.

This chain is Deoxyguanosinetriphosphate triphosphohydrolase-like protein, found in Agrobacterium fabrum (strain C58 / ATCC 33970) (Agrobacterium tumefaciens (strain C58)).